The following is a 158-amino-acid chain: Transcription elongation factor GreA (158 aa).

Positions 45 to 73 (AEYHAAREQQSFIEGRIKQLESELSHAEI) form a coiled coil.

Belongs to the GreA/GreB family.

Necessary for efficient RNA polymerase transcription elongation past template-encoded arresting sites. The arresting sites in DNA have the property of trapping a certain fraction of elongating RNA polymerases that pass through, resulting in locked ternary complexes. Cleavage of the nascent transcript by cleavage factors such as GreA or GreB allows the resumption of elongation from the new 3'terminus. GreA releases sequences of 2 to 3 nucleotides. The chain is Transcription elongation factor GreA from Xanthomonas axonopodis pv. citri (strain 306).